The chain runs to 362 residues: 3-dehydroquinate synthase (362 aa).

Residues 71–76 (DGEQYK), 105–109 (GVVGD), 129–130 (TT), K142, K151, and 169–172 (CLKT) contribute to the NAD(+) site. Residues E184, H247, and H264 each contribute to the Zn(2+) site.

Belongs to the sugar phosphate cyclases superfamily. Dehydroquinate synthase family. Requires Co(2+) as cofactor. Zn(2+) serves as cofactor. NAD(+) is required as a cofactor.

It is found in the cytoplasm. The catalysed reaction is 7-phospho-2-dehydro-3-deoxy-D-arabino-heptonate = 3-dehydroquinate + phosphate. It functions in the pathway metabolic intermediate biosynthesis; chorismate biosynthesis; chorismate from D-erythrose 4-phosphate and phosphoenolpyruvate: step 2/7. Functionally, catalyzes the conversion of 3-deoxy-D-arabino-heptulosonate 7-phosphate (DAHP) to dehydroquinate (DHQ). The chain is 3-dehydroquinate synthase from Shigella boydii serotype 18 (strain CDC 3083-94 / BS512).